Here is a 353-residue protein sequence, read N- to C-terminus: Cyclin-dependent kinase-like 1 (353 aa).

One can recognise a Protein kinase domain in the interval 4-286 (YDRLSKLGEG…CSELMLHGIF (283 aa)). Residues 10–18 (LGEGSYGVV) and K33 contribute to the ATP site. D126 (proton acceptor) is an active-site residue. The disordered stretch occupies residues 331–353 (GGNHGNNNNNGNGINRNFLPTIS). A compositionally biased stretch (low complexity) spans 335–347 (GNNNNNGNGINRN).

This sequence belongs to the protein kinase superfamily. Ser/Thr protein kinase family. In terms of tissue distribution, specifically expressed in head and tail ciliated sensory neurons.

The protein localises to the cell projection. It is found in the cilium. It catalyses the reaction L-seryl-[protein] + ATP = O-phospho-L-seryl-[protein] + ADP + H(+). The enzyme catalyses L-threonyl-[protein] + ATP = O-phospho-L-threonyl-[protein] + ADP + H(+). Functionally, modulates cilium assembly. The chain is Cyclin-dependent kinase-like 1 from Caenorhabditis elegans.